A 503-amino-acid polypeptide reads, in one-letter code: Type II secretion system ATPase E (503 aa).

Residues C397, C400, C430, and C433 each contribute to the Zn(2+) site.

It belongs to the GSP E family. Forms homooligomers; most probably hexamers. Interacts with EpsL/GspL. The cofactor is Zn(2+).

The protein resides in the cell inner membrane. It catalyses the reaction ATP + H2O + cellular proteinSide 1 = ADP + phosphate + cellular proteinSide 2.. ATPase component of the type II secretion system required for the energy-dependent secretion of extracellular factors such as proteases and toxins from the periplasm. Acts as a molecular motor to provide the energy that is required for assembly of the pseudopilus and the extrusion of substrates generated in the cytoplasm. This Vibrio cholerae serotype O1 (strain ATCC 39315 / El Tor Inaba N16961) protein is Type II secretion system ATPase E (epsE).